Consider the following 293-residue polypeptide: Elongation factor Ts (293 aa).

The interval 80–83 is involved in Mg(2+) ion dislocation from EF-Tu; the sequence is TDFV.

This sequence belongs to the EF-Ts family.

The protein resides in the cytoplasm. In terms of biological role, associates with the EF-Tu.GDP complex and induces the exchange of GDP to GTP. It remains bound to the aminoacyl-tRNA.EF-Tu.GTP complex up to the GTP hydrolysis stage on the ribosome. This Lacticaseibacillus casei (strain BL23) (Lactobacillus casei) protein is Elongation factor Ts.